Consider the following 384-residue polypeptide: Geranylgeranyl pyrophosphate synthase (384 aa).

2 disordered regions span residues 1–25 and 39–78; these read MVPN…TSST and RPVP…PARY. The segment covering 47 to 62 has biased composition (polar residues); the sequence is LGQNNTRNRSSSTTAI. Positions 112, 115, and 144 each coordinate isopentenyl diphosphate. The Mg(2+) site is built by Asp151 and Asp155. Arg160 serves as a coordination point for dimethylallyl diphosphate. Arg161 is a binding site for isopentenyl diphosphate. Lys238, Thr239, and Gln272 together coordinate dimethylallyl diphosphate. Residue Asp275 participates in Mg(2+) binding. 3 residues coordinate dimethylallyl diphosphate: Asn279, Lys289, and Lys299.

This sequence belongs to the FPP/GGPP synthase family. It depends on Mg(2+) as a cofactor.

The catalysed reaction is isopentenyl diphosphate + dimethylallyl diphosphate = (2E)-geranyl diphosphate + diphosphate. It carries out the reaction isopentenyl diphosphate + (2E)-geranyl diphosphate = (2E,6E)-farnesyl diphosphate + diphosphate. It catalyses the reaction isopentenyl diphosphate + (2E,6E)-farnesyl diphosphate = (2E,6E,10E)-geranylgeranyl diphosphate + diphosphate. It functions in the pathway secondary metabolite biosynthesis. Functionally, catalyzes the trans-addition of the 3 molecules of isopentenyl diphosphate (IPP) onto dimethylallyl diphosphate (DMAPP) to form geranylgeranyl pyrophosphate (GGPP). GGPP is a precursor for the biosynthesis of many secondary metabolites, including the indole diterpenes nodulisporic acids (NA). This Hypoxylon pulicicidum protein is Geranylgeranyl pyrophosphate synthase.